A 147-amino-acid chain; its full sequence is Large-conductance mechanosensitive channel (147 aa).

2 helical membrane passes run 8 to 28 (FIMK…AAFG) and 81 to 101 (GIFL…FMII).

This sequence belongs to the MscL family. In terms of assembly, homopentamer.

It is found in the cell inner membrane. Functionally, channel that opens in response to stretch forces in the membrane lipid bilayer. May participate in the regulation of osmotic pressure changes within the cell. This chain is Large-conductance mechanosensitive channel, found in Trichlorobacter lovleyi (strain ATCC BAA-1151 / DSM 17278 / SZ) (Geobacter lovleyi).